The following is a 464-amino-acid chain: Gasdermin-A3 (464 aa).

The segment at 1–261 is triggers pyroptosis; that stretch reads MPVFEDVTRA…EEPEEEKLIG (261 aa). Residue 9-13 participates in a cardiolipin binding; the sequence is RALVR. 4 beta stranded membrane passes run 78 to 95, 99 to 120, 164 to 180, and 184 to 198; these read NFSF…LVEV, VKVK…TLSV, VTVE…SLPS, and LGLQ…AVTI. Residues 255–327 adopt a coiled-coil conformation; it reads EEEKLIGEMH…DKGQKVTLEA (73 aa).

Belongs to the gasdermin family. Homooligomer; homooligomeric ring-shaped pore complex containing 18-36 subunits when inserted in the membrane. Post-translationally, cleavage relieves autoinhibition by releasing the N-terminal moiety (Gasdermin-A3, N-terminal) that initiates pyroptosis. In contrast to Gsdma, not cleaved by bacterial effector protein SpeB. In terms of processing, palmitoylated. In terms of tissue distribution, highest levels in skin with weak expression in placenta and testis. Not detected in the gastrointestinal tract. In skin, expressed in postnatal hair follicles and epidermis as well as sebaceous gland basal cells.

Its subcellular location is the cytoplasm. The protein localises to the cytosol. It is found in the cell membrane. The protein resides in the mitochondrion membrane. The full-length protein before cleavage is inactive: intramolecular interactions between N- and C-terminal domains mediate autoinhibition in the absence of activation signal. The intrinsic pyroptosis-inducing activity is carried by the released N-terminal moiety (Gasdermin-A3, N-terminal). Its function is as follows. Precursor of a pore-forming protein involved in the transition from catagen to telogen at the end of hair follicle morphogenesis. This form constitutes the precursor of the pore: upon cleavage, the released N-terminal moiety (Gasdermin-A3, N-terminal) binds to membranes and forms pores, triggering pyroptosis. This form acts as a sensor of infection: activation is triggered by cleavage by some bacterial effector protein, which releases the N-terminal moiety (Gasdermin-A3, N-terminal). Functionally, pore-forming protein that causes membrane permeabilization and pyroptosis. Released upon cleavage by some bacterial effector protein, and binds to membrane inner leaflet lipids. Homooligomerizes within the membrane and forms pores of 10-15 nanometers (nm) of inner diameter, allowing the release of mature interleukin-1 (IL1B and IL18) and triggering pyroptosis. Binds to membrane inner leaflet lipids, including bisphosphorylated phosphatidylinositols, such as phosphatidylinositol (4,5)-bisphosphate, as well as phosphatidylinositol (3,4,5)-bisphosphate, and more weakly to monophosphorylated phosphatidylinositols. Also binds to bacterial and mitochondrial lipids, including cardiolipin, and exhibits bactericidal activity. Plays a role in the transition from catagen to telogen at the end of hair follicle morphogenesis, possibly by regulating hair follicle stem cell niche maintenance. Also required for mammary gland development. The sequence is that of Gasdermin-A3 from Mus musculus (Mouse).